A 247-amino-acid polypeptide reads, in one-letter code: ATP synthase subunit a (247 aa).

The next 6 helical transmembrane spans lie at 24–44 (IAFT…AAMM), 82–102 (FFPL…VGII), 112–132 (IIVT…YGFY), 141–161 (LFVP…IEII), 181–201 (GHVT…LGFV), and 206–226 (ALLP…VAFL).

This sequence belongs to the ATPase A chain family. As to quaternary structure, F-type ATPases have 2 components, CF(1) - the catalytic core - and CF(0) - the membrane proton channel. CF(1) has five subunits: alpha(3), beta(3), gamma(1), delta(1), epsilon(1). CF(0) has four main subunits: a, b, b' and c.

It localises to the cell inner membrane. Key component of the proton channel; it plays a direct role in the translocation of protons across the membrane. The sequence is that of ATP synthase subunit a from Bradyrhizobium sp. (strain ORS 278).